A 180-amino-acid polypeptide reads, in one-letter code: Probable macrolide acetyltransferase (180 aa).

Belongs to the transferase hexapeptide repeat family.

This is Probable macrolide acetyltransferase from Lysinibacillus sphaericus (Bacillus sphaericus).